Here is a 240-residue protein sequence, read N- to C-terminus: tRNA pseudouridine synthase A (240 aa).

D52 (nucleophile) is an active-site residue. Residue Y110 coordinates substrate.

The protein belongs to the tRNA pseudouridine synthase TruA family. Homodimer.

The catalysed reaction is uridine(38/39/40) in tRNA = pseudouridine(38/39/40) in tRNA. Its function is as follows. Formation of pseudouridine at positions 38, 39 and 40 in the anticodon stem and loop of transfer RNAs. This chain is tRNA pseudouridine synthase A, found in Solibacter usitatus (strain Ellin6076).